The sequence spans 225 residues: Enolase-phosphatase E1 (225 aa).

The protein belongs to the HAD-like hydrolase superfamily. MasA/MtnC family. In terms of assembly, monomer. Requires Mg(2+) as cofactor.

It catalyses the reaction 5-methylsulfanyl-2,3-dioxopentyl phosphate + H2O = 1,2-dihydroxy-5-(methylsulfanyl)pent-1-en-3-one + phosphate. It participates in amino-acid biosynthesis; L-methionine biosynthesis via salvage pathway; L-methionine from S-methyl-5-thio-alpha-D-ribose 1-phosphate: step 3/6. The protein operates within amino-acid biosynthesis; L-methionine biosynthesis via salvage pathway; L-methionine from S-methyl-5-thio-alpha-D-ribose 1-phosphate: step 4/6. In terms of biological role, bifunctional enzyme that catalyzes the enolization of 2,3-diketo-5-methylthiopentyl-1-phosphate (DK-MTP-1-P) into the intermediate 2-hydroxy-3-keto-5-methylthiopentenyl-1-phosphate (HK-MTPenyl-1-P), which is then dephosphorylated to form the acireductone 1,2-dihydroxy-3-keto-5-methylthiopentene (DHK-MTPene). In Shewanella loihica (strain ATCC BAA-1088 / PV-4), this protein is Enolase-phosphatase E1.